The primary structure comprises 155 residues: Isotocin-neurophysin IT 1 (155 aa).

A signal peptide spans 1-19 (MTGTAISVCLLFLLSVCSA). A disulfide bridge connects residues cysteine 20 and cysteine 25. Position 28 is a glycine amide (glycine 28). 7 disulfide bridges follow: cysteine 41-cysteine 85, cysteine 44-cysteine 58, cysteine 52-cysteine 75, cysteine 59-cysteine 65, cysteine 92-cysteine 105, cysteine 99-cysteine 117, and cysteine 106-cysteine 111.

It belongs to the vasopressin/oxytocin family. Seven disulfide bonds are present in neurophysin.

In terms of biological role, isotocin causes contraction of smooth muscles. This chain is Isotocin-neurophysin IT 1, found in Takifugu rubripes (Japanese pufferfish).